Here is a 190-residue protein sequence, read N- to C-terminus: Crossover junction endodeoxyribonuclease RuvC (190 aa).

Residues D8, E67, and D139 contribute to the active site. 3 residues coordinate Mg(2+): D8, E67, and D139.

It belongs to the RuvC family. Homodimer which binds Holliday junction (HJ) DNA. The HJ becomes 2-fold symmetrical on binding to RuvC with unstacked arms; it has a different conformation from HJ DNA in complex with RuvA. In the full resolvosome a probable DNA-RuvA(4)-RuvB(12)-RuvC(2) complex forms which resolves the HJ. Requires Mg(2+) as cofactor.

It is found in the cytoplasm. It carries out the reaction Endonucleolytic cleavage at a junction such as a reciprocal single-stranded crossover between two homologous DNA duplexes (Holliday junction).. Functionally, the RuvA-RuvB-RuvC complex processes Holliday junction (HJ) DNA during genetic recombination and DNA repair. Endonuclease that resolves HJ intermediates. Cleaves cruciform DNA by making single-stranded nicks across the HJ at symmetrical positions within the homologous arms, yielding a 5'-phosphate and a 3'-hydroxyl group; requires a central core of homology in the junction. The consensus cleavage sequence is 5'-(A/T)TT(C/G)-3'. Cleavage occurs on the 3'-side of the TT dinucleotide at the point of strand exchange. HJ branch migration catalyzed by RuvA-RuvB allows RuvC to scan DNA until it finds its consensus sequence, where it cleaves and resolves the cruciform DNA. This is Crossover junction endodeoxyribonuclease RuvC from Haemophilus influenzae (strain PittGG).